An 895-amino-acid chain; its full sequence is Protein translocase subunit SecA (895 aa).

ATP contacts are provided by residues Q86, 104 to 108 (GEGKT), and D494. 2 stretches are compositionally biased toward low complexity: residues 838 to 849 (AAATPPGFGAPP) and 870 to 882 (GDAA…TGNR). The interval 838-895 (AAATPPGFGAPPVRQQLQYSAPTAEGDVEVHAGDAAATDADTGNRAQRRANQRQQREV) is disordered.

The protein belongs to the SecA family. Monomer and homodimer. Part of the essential Sec protein translocation apparatus which comprises SecA, SecYEG and auxiliary proteins SecDF. Other proteins may also be involved.

Its subcellular location is the cell membrane. The protein localises to the cytoplasm. The catalysed reaction is ATP + H2O + cellular proteinSide 1 = ADP + phosphate + cellular proteinSide 2.. Part of the Sec protein translocase complex. Interacts with the SecYEG preprotein conducting channel. Has a central role in coupling the hydrolysis of ATP to the transfer of proteins into and across the cell membrane, serving as an ATP-driven molecular motor driving the stepwise translocation of polypeptide chains across the membrane. The protein is Protein translocase subunit SecA of Kineococcus radiotolerans (strain ATCC BAA-149 / DSM 14245 / SRS30216).